The chain runs to 243 residues: 1-(5-phosphoribosyl)-5-[(5-phosphoribosylamino)methylideneamino] imidazole-4-carboxamide isomerase (243 aa).

Asp-10 acts as the Proton acceptor in catalysis. The active-site Proton donor is Asp-131.

This sequence belongs to the HisA/HisF family.

The protein resides in the cytoplasm. The enzyme catalyses 1-(5-phospho-beta-D-ribosyl)-5-[(5-phospho-beta-D-ribosylamino)methylideneamino]imidazole-4-carboxamide = 5-[(5-phospho-1-deoxy-D-ribulos-1-ylimino)methylamino]-1-(5-phospho-beta-D-ribosyl)imidazole-4-carboxamide. It functions in the pathway amino-acid biosynthesis; L-histidine biosynthesis; L-histidine from 5-phospho-alpha-D-ribose 1-diphosphate: step 4/9. This Rhizorhabdus wittichii (strain DSM 6014 / CCUG 31198 / JCM 15750 / NBRC 105917 / EY 4224 / RW1) (Sphingomonas wittichii) protein is 1-(5-phosphoribosyl)-5-[(5-phosphoribosylamino)methylideneamino] imidazole-4-carboxamide isomerase.